The sequence spans 509 residues: Cytochrome P450 monooxygenase aba1 (509 aa).

Residues 1–31 form the signal peptide; it reads MSNSILNLGSFACLLSLGSIVLWYTISAVLA. Asn-402 carries N-linked (GlcNAc...) asparagine glycosylation. Cys-451 provides a ligand contact to heme. A glycan (N-linked (GlcNAc...) asparagine) is linked at Asn-462.

This sequence belongs to the cytochrome P450 family. Heme is required as a cofactor.

It participates in hormone biosynthesis. Its function is as follows. Cytochrome P450 monooxygenase; part of the gene cluster that mediates the biosynthesis of abscisic acid (ABA), a phytohormone that acts antagonistically toward salicylic acid (SA), jasmonic acid (JA) and ethylene (ETH) signaling, to impede plant defense responses. The first step of the pathway catalyzes the reaction from farnesyl diphosphate to alpha-ionylideneethane performed by the alpha-ionylideneethane synthase aba3 via a three-step reaction mechanism involving 2 neutral intermediates, beta-farnesene and allofarnesene. The cytochrome P450 monooxygenase aba1 might then be involved in the conversion of alpha-ionylideneethane to alpha-ionylideneacetic acid. Alpha-ionylideneacetic acid is further converted to abscisic acid in 2 steps involving the cytochrome P450 monooxygenase aba2 and the short-chain dehydrogenase/reductase aba4, via the intermediates 1'-deoxy-ABA or 1',4'-trans-diol-ABA, depending on the order of action of these 2 enzymes. Aba2 is responsible for the hydroxylation of carbon atom C-1' and aba4 might be involved in the oxidation of the C-4' carbon atom. The sequence is that of Cytochrome P450 monooxygenase aba1 (aba1) from Botryotinia fuckeliana (strain B05.10) (Noble rot fungus).